Reading from the N-terminus, the 135-residue chain is Aspartate 1-decarboxylase (135 aa).

Serine 25 acts as the Schiff-base intermediate with substrate; via pyruvic acid in catalysis. Serine 25 is subject to Pyruvic acid (Ser). Residue threonine 57 coordinates substrate. The Proton donor role is filled by tyrosine 58. 73–75 (GAA) contributes to the substrate binding site.

Belongs to the PanD family. Heterooctamer of four alpha and four beta subunits. It depends on pyruvate as a cofactor. Post-translationally, is synthesized initially as an inactive proenzyme, which is activated by self-cleavage at a specific serine bond to produce a beta-subunit with a hydroxyl group at its C-terminus and an alpha-subunit with a pyruvoyl group at its N-terminus.

It is found in the cytoplasm. The catalysed reaction is L-aspartate + H(+) = beta-alanine + CO2. The protein operates within cofactor biosynthesis; (R)-pantothenate biosynthesis; beta-alanine from L-aspartate: step 1/1. Catalyzes the pyruvoyl-dependent decarboxylation of aspartate to produce beta-alanine. This is Aspartate 1-decarboxylase from Mycobacterium sp. (strain JLS).